We begin with the raw amino-acid sequence, 229 residues long: Ribonuclease 3 (229 aa).

Residues 4-133 (WEELQESVGF…FIGALYLDNG (130 aa)) form the RNase III domain. Glu-46 contacts Mg(2+). Residue Asp-50 is part of the active site. Mg(2+) is bound by residues Asp-119 and Glu-122. Residue Glu-122 is part of the active site. The region spanning 159 to 228 (DYKTQLQEIV…AQFAINQLTH (70 aa)) is the DRBM domain.

This sequence belongs to the ribonuclease III family. In terms of assembly, homodimer. The cofactor is Mg(2+).

It is found in the cytoplasm. It catalyses the reaction Endonucleolytic cleavage to 5'-phosphomonoester.. Digests double-stranded RNA. Involved in the processing of primary rRNA transcript to yield the immediate precursors to the large and small rRNAs (23S and 16S). Processes some mRNAs, and tRNAs when they are encoded in the rRNA operon. Processes pre-crRNA and tracrRNA of type II CRISPR loci if present in the organism. This chain is Ribonuclease 3, found in Listeria welshimeri serovar 6b (strain ATCC 35897 / DSM 20650 / CCUG 15529 / CIP 8149 / NCTC 11857 / SLCC 5334 / V8).